A 327-amino-acid polypeptide reads, in one-letter code: Glycerol-3-phosphate dehydrogenase [NAD(P)+] (327 aa).

Residues W11, H30, and K103 each coordinate NADPH. Sn-glycerol 3-phosphate contacts are provided by K103, G131, and S133. A135 contacts NADPH. The sn-glycerol 3-phosphate site is built by K186, D243, S253, R254, and N255. The active-site Proton acceptor is K186. Position 254 (R254) interacts with NADPH. Positions 281 and 283 each coordinate NADPH.

It belongs to the NAD-dependent glycerol-3-phosphate dehydrogenase family.

The protein localises to the cytoplasm. The catalysed reaction is sn-glycerol 3-phosphate + NAD(+) = dihydroxyacetone phosphate + NADH + H(+). The enzyme catalyses sn-glycerol 3-phosphate + NADP(+) = dihydroxyacetone phosphate + NADPH + H(+). Its pathway is membrane lipid metabolism; glycerophospholipid metabolism. Catalyzes the reduction of the glycolytic intermediate dihydroxyacetone phosphate (DHAP) to sn-glycerol 3-phosphate (G3P), the key precursor for phospholipid synthesis. In Wolbachia pipientis wMel, this protein is Glycerol-3-phosphate dehydrogenase [NAD(P)+].